Reading from the N-terminus, the 216-residue chain is uncharacterized protein (216 aa).

The chain crosses the membrane as a helical span at residues 7-29; it reads ILVIFFLIFFIGFEFSDMTLAFI.

The protein localises to the membrane. This is an uncharacterized protein from Archaeoglobus fulgidus (strain ATCC 49558 / DSM 4304 / JCM 9628 / NBRC 100126 / VC-16).